The following is a 134-amino-acid chain: Large-conductance mechanosensitive channel (134 aa).

2 helical membrane passes run F10–G30 and G76–I96.

Belongs to the MscL family. Homopentamer.

It localises to the cell inner membrane. Its function is as follows. Channel that opens in response to stretch forces in the membrane lipid bilayer. May participate in the regulation of osmotic pressure changes within the cell. In Prosthecochloris aestuarii (strain DSM 271 / SK 413), this protein is Large-conductance mechanosensitive channel.